Here is a 294-residue protein sequence, read N- to C-terminus: MRFVIVTGLSGAGKTQAIRSLEDLGFFCVDNLPPTLIPKFAEACYQTEGKIKKIALVIDIRGGKFFDDLFESLKYLKEEGYKYEILFLDASDEVLIKRFKESRRKHPLSPDGRILNGISMERNRLREVKDRADNIINTSELATRELREAINEIYGEHDQIENQLIITVLSFGFKHGIPLDSDLVFDVRFLPNPYYIKELKQYSGKDKKVSDYVMSFDVTNKFVNRLEDMLDFLIPNYFKEGKRQLIISIGCTGGRHRSVAIANAIYEGLKSKGHKVNIDHRDINEDIHKGGKKL.

8 to 15 is a binding site for ATP; sequence GLSGAGKT. 59–62 is a binding site for GTP; sequence DIRG.

This sequence belongs to the RapZ-like family.

Functionally, displays ATPase and GTPase activities. This Clostridium botulinum (strain Okra / Type B1) protein is Nucleotide-binding protein CLD_1131.